The sequence spans 167 residues: Probable phospholipid hydroperoxide glutathione peroxidase (167 aa).

Residue Cys-41 is part of the active site.

This sequence belongs to the glutathione peroxidase family.

Its subcellular location is the cytoplasm. The catalysed reaction is a hydroperoxy polyunsaturated fatty acid + 2 glutathione = a hydroxy polyunsaturated fatty acid + glutathione disulfide + H2O. Functionally, protects cells and enzymes from oxidative damage, by catalyzing the reduction of hydrogen peroxide, lipid peroxides and organic hydroperoxide, by glutathione. The protein is Probable phospholipid hydroperoxide glutathione peroxidase (CSA) of Citrus sinensis (Sweet orange).